The sequence spans 220 residues: Iron-sulfur cluster repair protein YtfE (220 aa).

It belongs to the RIC family. YtfE subfamily. As to quaternary structure, homodimer.

It is found in the cytoplasm. Its function is as follows. Di-iron-containing protein involved in the repair of iron-sulfur clusters damaged by oxidative and nitrosative stress conditions. This chain is Iron-sulfur cluster repair protein YtfE, found in Shigella boydii serotype 18 (strain CDC 3083-94 / BS512).